Here is a 471-residue protein sequence, read N- to C-terminus: Histidinol dehydrogenase (471 aa).

Y139, Q204, and N236 together coordinate NAD(+). Residues T259, Q281, and H284 each contribute to the substrate site. The Zn(2+) site is built by Q281 and H284. Active-site proton acceptor residues include E350 and H351. 4 residues coordinate substrate: H351, D384, E438, and H443. Position 384 (D384) interacts with Zn(2+). H443 is a Zn(2+) binding site.

This sequence belongs to the histidinol dehydrogenase family. Zn(2+) is required as a cofactor.

The enzyme catalyses L-histidinol + 2 NAD(+) + H2O = L-histidine + 2 NADH + 3 H(+). It participates in amino-acid biosynthesis; L-histidine biosynthesis; L-histidine from 5-phospho-alpha-D-ribose 1-diphosphate: step 9/9. Functionally, catalyzes the sequential NAD-dependent oxidations of L-histidinol to L-histidinaldehyde and then to L-histidine. The chain is Histidinol dehydrogenase from Bifidobacterium longum (strain NCC 2705).